We begin with the raw amino-acid sequence, 167 residues long: Ribosome-binding factor A (167 aa).

The interval 122 to 167 (LAASAKHAGEADPYKGDSPEDIDEDDFDEEDTDLSGDNDLDEDANR) is disordered. Positions 128–139 (HAGEADPYKGDS) are enriched in basic and acidic residues. Residues 140–167 (PEDIDEDDFDEEDTDLSGDNDLDEDANR) show a composition bias toward acidic residues.

The protein belongs to the RbfA family. In terms of assembly, monomer. Binds 30S ribosomal subunits, but not 50S ribosomal subunits or 70S ribosomes.

The protein resides in the cytoplasm. One of several proteins that assist in the late maturation steps of the functional core of the 30S ribosomal subunit. Associates with free 30S ribosomal subunits (but not with 30S subunits that are part of 70S ribosomes or polysomes). Required for efficient processing of 16S rRNA. May interact with the 5'-terminal helix region of 16S rRNA. The sequence is that of Ribosome-binding factor A from Paenarthrobacter aurescens (strain TC1).